A 96-amino-acid chain; its full sequence is Co-chaperonin GroES (96 aa).

This sequence belongs to the GroES chaperonin family. As to quaternary structure, heptamer of 7 subunits arranged in a ring. Interacts with the chaperonin GroEL.

It is found in the cytoplasm. Functionally, together with the chaperonin GroEL, plays an essential role in assisting protein folding. The GroEL-GroES system forms a nano-cage that allows encapsulation of the non-native substrate proteins and provides a physical environment optimized to promote and accelerate protein folding. GroES binds to the apical surface of the GroEL ring, thereby capping the opening of the GroEL channel. This Chromohalobacter salexigens (strain ATCC BAA-138 / DSM 3043 / CIP 106854 / NCIMB 13768 / 1H11) protein is Co-chaperonin GroES.